Reading from the N-terminus, the 89-residue chain is Small ribosomal subunit protein uS15 (89 aa).

This sequence belongs to the universal ribosomal protein uS15 family. In terms of assembly, part of the 30S ribosomal subunit. Forms a bridge to the 50S subunit in the 70S ribosome, contacting the 23S rRNA.

One of the primary rRNA binding proteins, it binds directly to 16S rRNA where it helps nucleate assembly of the platform of the 30S subunit by binding and bridging several RNA helices of the 16S rRNA. In terms of biological role, forms an intersubunit bridge (bridge B4) with the 23S rRNA of the 50S subunit in the ribosome. This chain is Small ribosomal subunit protein uS15, found in Saccharopolyspora erythraea (strain ATCC 11635 / DSM 40517 / JCM 4748 / NBRC 13426 / NCIMB 8594 / NRRL 2338).